Here is a 446-residue protein sequence, read N- to C-terminus: Tubulin beta-6 chain (446 aa).

Residues 1–4 (MREI) carry the MREI motif motif. GTP is bound by residues Q11, E69, S138, G142, T143, G144, N204, and N226. E69 is a Mg(2+) binding site. Residues 419 to 446 (VSEYQQYQDATADVEEYEEAEASPEKET) are disordered. The segment covering 430 to 440 (ADVEEYEEAEA) has biased composition (acidic residues).

It belongs to the tubulin family. In terms of assembly, dimer of alpha and beta chains. A typical microtubule is a hollow water-filled tube with an outer diameter of 25 nm and an inner diameter of 15 nM. Alpha-beta heterodimers associate head-to-tail to form protofilaments running lengthwise along the microtubule wall with the beta-tubulin subunit facing the microtubule plus end conferring a structural polarity. Microtubules usually have 13 protofilaments but different protofilament numbers can be found in some organisms and specialized cells. Requires Mg(2+) as cofactor. In terms of processing, some glutamate residues at the C-terminus are polyglycylated, resulting in polyglycine chains on the gamma-carboxyl group. Glycylation is mainly limited to tubulin incorporated into axonemes (cilia and flagella) whereas glutamylation is prevalent in neuronal cells, centrioles, axonemes, and the mitotic spindle. Both modifications can coexist on the same protein on adjacent residues, and lowering polyglycylation levels increases polyglutamylation, and reciprocally. The precise function of polyglycylation is still unclear. Post-translationally, some glutamate residues at the C-terminus are polyglutamylated, resulting in polyglutamate chains on the gamma-carboxyl group. Polyglutamylation plays a key role in microtubule severing by spastin (SPAST). SPAST preferentially recognizes and acts on microtubules decorated with short polyglutamate tails: severing activity by SPAST increases as the number of glutamates per tubulin rises from one to eight, but decreases beyond this glutamylation threshold. As to expression, highly expressed in bone marrow.

It is found in the cytoplasm. It localises to the cytoskeleton. Tubulin is the major constituent of microtubules, a cylinder consisting of laterally associated linear protofilaments composed of alpha- and beta-tubulin heterodimers. Microtubules grow by the addition of GTP-tubulin dimers to the microtubule end, where a stabilizing cap forms. Below the cap, tubulin dimers are in GDP-bound state, owing to GTPase activity of alpha-tubulin. The sequence is that of Tubulin beta-6 chain from Gallus gallus (Chicken).